The primary structure comprises 246 residues: Tyrosine recombinase XerD-like (246 aa).

One can recognise a Core-binding (CB) domain in the interval 1 to 72 (MINDINNFIE…AVNQFLFFLY (72 aa)). The Tyr recombinase domain occupies 84–246 (QETEKITLAQ…TPITLERYYR (163 aa)). Residues lysine 149 and arginine 212 contribute to the active site. Catalysis depends on tyrosine 244, which acts as the O-(3'-phospho-DNA)-tyrosine intermediate.

It belongs to the 'phage' integrase family. XerD-like subfamily.

It localises to the cytoplasm. Functionally, putative tyrosine recombinase. Not involved in the cutting and rejoining of the recombining DNA molecules on dif(SL) site. The polypeptide is Tyrosine recombinase XerD-like (Streptococcus agalactiae serotype V (strain ATCC BAA-611 / 2603 V/R)).